The chain runs to 506 residues: 2-isopropylmalate synthase (506 aa).

In terms of domain architecture, Pyruvate carboxyltransferase spans 4–266 (ILFMDTTLRD…EPSMTLKEIK (263 aa)). Mn(2+) is bound by residues Asp13, His201, His203, and Asn237. A regulatory domain region spans residues 390-506 (NITQLQVHFV…KLKSFIQLVK (117 aa)).

The protein belongs to the alpha-IPM synthase/homocitrate synthase family. LeuA type 1 subfamily. Homodimer. Mn(2+) is required as a cofactor.

The protein resides in the cytoplasm. It catalyses the reaction 3-methyl-2-oxobutanoate + acetyl-CoA + H2O = (2S)-2-isopropylmalate + CoA + H(+). Its pathway is amino-acid biosynthesis; L-leucine biosynthesis; L-leucine from 3-methyl-2-oxobutanoate: step 1/4. Catalyzes the condensation of the acetyl group of acetyl-CoA with 3-methyl-2-oxobutanoate (2-ketoisovalerate) to form 3-carboxy-3-hydroxy-4-methylpentanoate (2-isopropylmalate). The sequence is that of 2-isopropylmalate synthase from Bacillus cereus (strain 03BB102).